A 402-amino-acid polypeptide reads, in one-letter code: 4-hydroxy-3-methylbut-2-enyl diphosphate reductase (402 aa).

Residue Cys-66 participates in [4Fe-4S] cluster binding. (2E)-4-hydroxy-3-methylbut-2-enyl diphosphate is bound at residue His-96. Residue His-96 participates in dimethylallyl diphosphate binding. Residue His-96 participates in isopentenyl diphosphate binding. Cys-157 provides a ligand contact to [4Fe-4S] cluster. His-185 is a (2E)-4-hydroxy-3-methylbut-2-enyl diphosphate binding site. His-185 is a dimethylallyl diphosphate binding site. His-185 is a binding site for isopentenyl diphosphate. Catalysis depends on Glu-187, which acts as the Proton donor. Thr-250 serves as a coordination point for (2E)-4-hydroxy-3-methylbut-2-enyl diphosphate. Cys-288 contributes to the [4Fe-4S] cluster binding site. (2E)-4-hydroxy-3-methylbut-2-enyl diphosphate-binding residues include Ser-317, Ser-318, Asn-319, and Ser-379. Dimethylallyl diphosphate-binding residues include Ser-317, Ser-318, Asn-319, and Ser-379. Residues Ser-317, Ser-318, Asn-319, and Ser-379 each contribute to the isopentenyl diphosphate site.

Belongs to the IspH family. It depends on [4Fe-4S] cluster as a cofactor.

It carries out the reaction isopentenyl diphosphate + 2 oxidized [2Fe-2S]-[ferredoxin] + H2O = (2E)-4-hydroxy-3-methylbut-2-enyl diphosphate + 2 reduced [2Fe-2S]-[ferredoxin] + 2 H(+). The catalysed reaction is dimethylallyl diphosphate + 2 oxidized [2Fe-2S]-[ferredoxin] + H2O = (2E)-4-hydroxy-3-methylbut-2-enyl diphosphate + 2 reduced [2Fe-2S]-[ferredoxin] + 2 H(+). Its pathway is isoprenoid biosynthesis; dimethylallyl diphosphate biosynthesis; dimethylallyl diphosphate from (2E)-4-hydroxy-3-methylbutenyl diphosphate: step 1/1. It participates in isoprenoid biosynthesis; isopentenyl diphosphate biosynthesis via DXP pathway; isopentenyl diphosphate from 1-deoxy-D-xylulose 5-phosphate: step 6/6. Functionally, catalyzes the conversion of 1-hydroxy-2-methyl-2-(E)-butenyl 4-diphosphate (HMBPP) into a mixture of isopentenyl diphosphate (IPP) and dimethylallyl diphosphate (DMAPP). Acts in the terminal step of the DOXP/MEP pathway for isoprenoid precursor biosynthesis. In Nostoc punctiforme (strain ATCC 29133 / PCC 73102), this protein is 4-hydroxy-3-methylbut-2-enyl diphosphate reductase.